A 737-amino-acid chain; its full sequence is Polyribonucleotide nucleotidyltransferase (737 aa).

The Mg(2+) site is built by Asp-489 and Asp-495. In terms of domain architecture, KH spans Pro-556–Ile-615. In terms of domain architecture, S1 motif spans Asp-625 to Lys-693. The tract at residues Ser-691–Glu-737 is disordered. Residues Pro-700 to Glu-737 show a composition bias toward basic and acidic residues.

Belongs to the polyribonucleotide nucleotidyltransferase family. It depends on Mg(2+) as a cofactor.

The protein resides in the cytoplasm. It carries out the reaction RNA(n+1) + phosphate = RNA(n) + a ribonucleoside 5'-diphosphate. Its function is as follows. Involved in mRNA degradation. Catalyzes the phosphorolysis of single-stranded polyribonucleotides processively in the 3'- to 5'-direction. The sequence is that of Polyribonucleotide nucleotidyltransferase from Streptococcus pneumoniae serotype 2 (strain D39 / NCTC 7466).